The chain runs to 343 residues: NADH-quinone oxidoreductase subunit H (343 aa).

Helical transmembrane passes span 21 to 41 (WTLVWTILKIAVLIAPILFCV), 95 to 115 (FILAPILTFSTALVSWAVVPF), 124 to 144 (VNVGVLFILAMSSLGAYGVLL), 172 to 192 (MGFTLVPVIMLSGSLNLGDIV), 197 to 217 (GLWYALPLLPGFFIYFISVVA), 257 to 277 (IIMVSVLGSLMFLGGWLPPIE), 281 to 301 (FIPGIVWLILKTGVLIFFFLW), and 317 to 337 (LGWKVFLPISLAWIFIVGLAM).

This sequence belongs to the complex I subunit 1 family. In terms of assembly, NDH-1 is composed of 14 different subunits. Subunits NuoA, H, J, K, L, M, N constitute the membrane sector of the complex.

Its subcellular location is the cell inner membrane. It catalyses the reaction a quinone + NADH + 5 H(+)(in) = a quinol + NAD(+) + 4 H(+)(out). Functionally, NDH-1 shuttles electrons from NADH, via FMN and iron-sulfur (Fe-S) centers, to quinones in the respiratory chain. The immediate electron acceptor for the enzyme in this species is believed to be ubiquinone. Couples the redox reaction to proton translocation (for every two electrons transferred, four hydrogen ions are translocated across the cytoplasmic membrane), and thus conserves the redox energy in a proton gradient. This subunit may bind ubiquinone. This is NADH-quinone oxidoreductase subunit H from Magnetococcus marinus (strain ATCC BAA-1437 / JCM 17883 / MC-1).